The primary structure comprises 263 residues: Formamidopyrimidine-DNA glycosylase (263 aa).

The Schiff-base intermediate with DNA role is filled by Pro-2. Glu-3 functions as the Proton donor in the catalytic mechanism. Lys-59 (proton donor; for beta-elimination activity) is an active-site residue. DNA contacts are provided by His-93 and Arg-111. The segment at 229–263 (KVYGKNGSLCVRCNNVLIRERHAGRSTHYCPHCQK) adopts an FPG-type zinc-finger fold. The active-site Proton donor; for delta-elimination activity is the Arg-253.

This sequence belongs to the FPG family. As to quaternary structure, monomer. Zn(2+) is required as a cofactor.

The enzyme catalyses Hydrolysis of DNA containing ring-opened 7-methylguanine residues, releasing 2,6-diamino-4-hydroxy-5-(N-methyl)formamidopyrimidine.. It carries out the reaction 2'-deoxyribonucleotide-(2'-deoxyribose 5'-phosphate)-2'-deoxyribonucleotide-DNA = a 3'-end 2'-deoxyribonucleotide-(2,3-dehydro-2,3-deoxyribose 5'-phosphate)-DNA + a 5'-end 5'-phospho-2'-deoxyribonucleoside-DNA + H(+). Its function is as follows. Involved in base excision repair of DNA damaged by oxidation or by mutagenic agents. Acts as a DNA glycosylase that recognizes and removes damaged bases. Has a preference for oxidized purines, such as 7,8-dihydro-8-oxoguanine (8-oxoG). Has AP (apurinic/apyrimidinic) lyase activity and introduces nicks in the DNA strand. Cleaves the DNA backbone by beta-delta elimination to generate a single-strand break at the site of the removed base with both 3'- and 5'-phosphates. This Carboxydothermus hydrogenoformans (strain ATCC BAA-161 / DSM 6008 / Z-2901) protein is Formamidopyrimidine-DNA glycosylase.